Reading from the N-terminus, the 4644-residue chain is Cytoplasmic dynein 1 heavy chain 1 (4644 aa).

Serine 2 bears the N-acetylserine mark. Positions 2–1865 (SEPGGGEDGS…SIQMANAKFN (1864 aa)) are stem. Coiled coils occupy residues 48–69 (AALE…FLSD), 179–200 (SVEK…NIEI), 453–476 (AHRK…QLRA), and 541–564 (TEAW…RITA). The residue at position 68 (serine 68) is a Phosphoserine. The segment at 446 to 701 (MVWRINPAHR…NTQEIFDDWA (256 aa)) is interaction with DYNC1I2. The tract at residues 649 to 800 (AKQIDRQLTA…EKVEERNTIS (152 aa)) is interaction with DYNC1LI2. The residue at position 1123 (lysine 1123) is an N6-acetyllysine. Positions 1169 to 1201 (TYVQSLKRKIKQFEKQVELYRNGQRLLEKQRFQ) form a coiled coil. At serine 1228 the chain carries Phosphoserine. 2 coiled-coil regions span residues 1229 to 1250 (AIQQ…AVES) and 1355 to 1371 (RKLR…LKNF). AAA stretches follow at residues 1866-2097 (YGFE…VLVS), 2178-2450 (EELK…LTRL), 2554-2803 (EVET…WVRG), and 2897-3166 (VFYE…GGRT). Residues 1904-1911 (GPAGTGKT) and 2222-2229 (GPSGSGKS) each bind ATP. Positions 2388 to 2408 (GEDEAQRRRKGKEDEGEEAAS) are disordered. ATP contacts are provided by residues 2593-2600 (GPPGSGKT) and 2935-2942 (GVSGAGKT). Coiled-coil stretches lie at residues 3187–3273 (EKRS…ADKQ), 3394–3498 (AIAQ…KNQM), and 3735–3798 (EFQL…VSQQ). Positions 3187–3498 (EKRSELEEQQ…KTSETFKNQM (312 aa)) are stalk. Lysine 3478 carries the post-translational modification N6-acetyllysine. AAA stretches follow at residues 3551 to 3780 (LSNA…EVTR) and 4003 to 4219 (AHMF…TVDT). Serine 4160 bears the Phosphoserine mark. At lysine 4281 the chain carries N6-acetyllysine. Threonine 4364 carries the phosphothreonine modification. Serine 4366 is subject to Phosphoserine.

This sequence belongs to the dynein heavy chain family. Homodimer. The cytoplasmic dynein 1 complex consists of two catalytic heavy chains (HCs) and a number of non-catalytic subunits presented by intermediate chains (ICs), light intermediate chains (LICs) and light chains (LCs); the composition seems to vary in respect to the IC, LIC and LC composition. The heavy chain homodimer serves as a scaffold for the probable homodimeric assembly of the respective non-catalytic subunits. The ICs and LICs bind directly to the HC dimer and dynein LCs assemble on the IC dimer. Interacts with DYNC1LI1; DYNC1LI1 and DYNC1LI2 bind mutually exclusive to DYNC1H1. Interacts with DYNC1LI2; DYNC1LI1 and DYNC1LI2 bind mutually exclusive to DYNC1H1. Interacts with DYNC1I2. Interacts with BICD2. Interacts with DNALI1.

Its subcellular location is the cytoplasm. The protein resides in the cytoskeleton. In terms of biological role, cytoplasmic dynein 1 acts as a motor for the intracellular retrograde motility of vesicles and organelles along microtubules. Dynein has ATPase activity; the force-producing power stroke is thought to occur on release of ADP. Plays a role in mitotic spindle assembly and metaphase plate congression. In Mus musculus (Mouse), this protein is Cytoplasmic dynein 1 heavy chain 1 (Dync1h1).